The primary structure comprises 929 residues: Transcription initiation factor TFIID subunit 3 (929 aa).

Disordered stretches follow at residues 131 to 152 and 176 to 197; these read IVSS…TSAE and LGKR…RPRL. A phosphoserine mark is found at Ser183, Ser199, Ser229, and Ser243. 2 disordered regions span residues 221 to 358 and 405 to 578; these read TQKI…ETIQ and DPFE…PWKE. Low complexity predominate over residues 265-288; sequence TKSFTPKTKTKTSSPGQKTKSPKT. Lys266 is modified (N6-acetyllysine). 3 positions are modified to phosphoserine: Ser291, Ser297, and Ser301. Polar residues-rich tracts occupy residues 340–358 and 434–466; these read PNRT…ETIQ and PKAS…SWTM. Thr501 is modified (phosphothreonine). The span at 504–514 shows a compositional bias: basic and acidic residues; it reads PLHKVYEEKTK. The segment covering 523 to 537 has biased composition (basic residues); that stretch reads KKLKKELKTKMKKKE. Over residues 538–578 the composition is skewed to basic and acidic residues; sequence KQRDREREKDKNKDKSKEKDKVKEKEKDKETGRETKYPWKE. A Glycyl lysine isopeptide (Lys-Gly) (interchain with G-Cter in SUMO2) cross-link involves residue Lys581. 2 stretches are compositionally biased toward basic and acidic residues: residues 603-612 and 621-648; these read KLKDGLVRKE and KDRE…DKMK. Positions 603-658 are disordered; sequence KLKDGLVRKEKEKHKDKKKDREKGKKDKDKREKEKVKDKGREDKMKAPAPPLVLPP. At Ser667 the chain carries Phosphoserine. A compositionally biased stretch (basic and acidic residues) spans 692 to 701; sequence EKEKVKEKEK. A disordered region spans residues 692–748; sequence EKEKVKEKEKKKDKKEKKKKKEKEKEKKEKEREKEKREREKREKEKEKHKHEKIKVE. Basic residues predominate over residues 702–713; the sequence is KKDKKEKKKKKE. The span at 714-737 shows a compositional bias: basic and acidic residues; it reads KEKEKKEKEREKEKREREKREKEK. Lys746 participates in a covalent cross-link: Glycyl lysine isopeptide (Lys-Gly) (interchain with G-Cter in SUMO2). Ser755 is subject to Phosphoserine. Residue Lys776 is modified to N6-acetyllysine. The span at 778 to 787 shows a compositional bias: low complexity; sequence VPAPEAKPAP. The disordered stretch occupies residues 778–807; sequence VPAPEAKPAPSQNRPKTPPPAPAPAPGPML. The segment covering 793–804 has biased composition (pro residues); it reads KTPPPAPAPAPG. A PHD-type zinc finger spans residues 865 to 915; the sequence is IWICPGCNKPDDGSPMIGCDDCDDWYHWPCVGIMTAPPEEMQWFCPKCANK. 8 residues coordinate Zn(2+): Cys868, Cys871, Cys883, Cys886, His891, Cys894, Cys909, and Cys912.

The protein belongs to the TAF3 family. In terms of assembly, component of the TFIID basal transcription factor complex, composed of TATA-box-binding protein TBP, and a number of TBP-associated factors (TAFs), including TAF1, TAF2, TAF3, TAF4, TAF5, TAF6, TAF7, TAF8, TAF9, TAF10, TAF11, TAF12 and TAF13. Interacts with TAF10 via the histone fold. Interacts with TAF13, TBP, SAP130 and GCN5L2. Interacts with TBPL2.

The protein localises to the nucleus. The TFIID basal transcription factor complex plays a major role in the initiation of RNA polymerase II (Pol II)-dependent transcription. TFIID recognizes and binds promoters with or without a TATA box via its subunit TBP, a TATA-box-binding protein, and promotes assembly of the pre-initiation complex (PIC). The TFIID complex consists of TBP and TBP-associated factors (TAFs), including TAF1, TAF2, TAF3, TAF4, TAF5, TAF6, TAF7, TAF8, TAF9, TAF10, TAF11, TAF12 and TAF13. The TFIID complex structure can be divided into 3 modules TFIID-A, TFIID-B, and TFIID-C. TAF3 forms the TFIID-A module together with TAF5 and TBP. Required in complex with TBPL2 for the differentiation of myoblasts into myocytes. The TAF3-TBPL2 complex replaces TFIID at specific promoters at an early stage in the differentiation process. The protein is Transcription initiation factor TFIID subunit 3 (TAF3) of Homo sapiens (Human).